The following is a 266-amino-acid chain: Glucosamine-6-phosphate deaminase (266 aa).

Residue Asp72 is the Proton acceptor; for enolization step of the active site. The active-site For ring-opening step is the Asp141. His143 (proton acceptor; for ring-opening step) is an active-site residue. Glu148 serves as the catalytic For ring-opening step.

It belongs to the glucosamine/galactosamine-6-phosphate isomerase family. NagB subfamily. As to quaternary structure, homohexamer.

The enzyme catalyses alpha-D-glucosamine 6-phosphate + H2O = beta-D-fructose 6-phosphate + NH4(+). Its pathway is amino-sugar metabolism; N-acetylneuraminate degradation; D-fructose 6-phosphate from N-acetylneuraminate: step 5/5. Its activity is regulated as follows. Allosterically activated by N-acetylglucosamine 6-phosphate (GlcNAc6P). In terms of biological role, catalyzes the reversible isomerization-deamination of glucosamine 6-phosphate (GlcN6P) to form fructose 6-phosphate (Fru6P) and ammonium ion. The chain is Glucosamine-6-phosphate deaminase from Enterobacter sp. (strain 638).